Here is a 520-residue protein sequence, read N- to C-terminus: Acetylcholine receptor subunit delta (520 aa).

Positions 1–24 (MAGPVLTLGLLAALVVCALPGSWG) are cleaved as a signal peptide. At 25–248 (LNEEQRLIQH…VTFYLIIRRK (224 aa)) the chain is on the extracellular side. 3 N-linked (GlcNAc...) asparagine glycosylation sites follow: Asn100, Asn167, and Asn193. Cys154 and Cys168 are joined by a disulfide. 3 helical membrane passes run 249 to 273 (PLFY…VFYL), 281 to 299 (TSVA…LLIS), and 315 to 336 (FLLF…VLNI). Over 337-474 (HFRTPSTHVL…WNQVARTVDR (138 aa)) the chain is Cytoplasmic. Phosphotyrosine; by Tyr-kinases is present on Tyr393. Residues 475–493 (LCLFVVTPVMVVGTAWIFL) form a helical membrane-spanning segment.

The protein belongs to the ligand-gated ion channel (TC 1.A.9) family. Acetylcholine receptor (TC 1.A.9.1) subfamily. Delta/CHRND sub-subfamily. As to quaternary structure, pentamer of two alpha chains, and one each of the beta, delta, and gamma (in immature muscle) or epsilon (in mature muscle) chains. The muscle heteropentamer composed of alpha-1, beta-1, delta, epsilon subunits interacts with the alpha-conotoxin ImII.

It localises to the postsynaptic cell membrane. It is found in the cell membrane. The enzyme catalyses K(+)(in) = K(+)(out). It catalyses the reaction Na(+)(in) = Na(+)(out). Its function is as follows. After binding acetylcholine, the AChR responds by an extensive change in conformation that affects all subunits and leads to opening of an ion-conducting channel across the plasma membrane. The protein is Acetylcholine receptor subunit delta (Chrnd) of Mus musculus (Mouse).